The primary structure comprises 450 residues: MQSIFGTDGIRGRFNEEITYSLAYKVGYALGSTLEKEKPILIGRDTRISGDILLQAITRGLNESGKKFINLGICPTPAIPYLIKQENLSSGIMISASHNPPEYNGIKIFDHSGQKITKHFENKIQKLIEELNQNISVPRKVIPLNKNKDLMDIYIKSLIQTMGGENLSGLKIILDTCHGSATTCAKKIFQYLGADVKVINNSKNGLKINMNCGSTNLEPLKKALIESPAHMGFSFDGDADRVIGIDSKGNVLDGDHILFLWGRELMEQKILTNNLLISTQMANLGFEKAWEKIGGILYRTDVGDKYVRDAIKEKRAVLGGEQSGHILSKINNFSGDGILTALQICKYCKKKNINLNDWLKSSFEPFPQKLTNINLDFNINKLNPKTKILIDQTIENFQAIYSDNCRVYIRPSGTEPVMRVLVEAKNHDKVNSLSSEITKKLFSEINKIIN.

Catalysis depends on Ser-97, which acts as the Phosphoserine intermediate. Mg(2+) contacts are provided by Ser-97, Asp-236, Asp-238, and Asp-240. The residue at position 97 (Ser-97) is a Phosphoserine.

This sequence belongs to the phosphohexose mutase family. Mg(2+) is required as a cofactor. Post-translationally, activated by phosphorylation.

It catalyses the reaction alpha-D-glucosamine 1-phosphate = D-glucosamine 6-phosphate. Its function is as follows. Catalyzes the conversion of glucosamine-6-phosphate to glucosamine-1-phosphate. The chain is Phosphoglucosamine mutase from Prochlorococcus marinus (strain MIT 9215).